The primary structure comprises 207 residues: Small ribosomal subunit protein uS4 (207 aa).

Residues 33 to 54 (KLDSKPGQHGRTSGARTSDYGN) form a disordered region. Positions 42–53 (GRTSGARTSDYG) are enriched in polar residues. The S4 RNA-binding domain occupies 97 to 157 (SRLDNVVYRM…EKSKKQVRIA (61 aa)).

Belongs to the universal ribosomal protein uS4 family. In terms of assembly, part of the 30S ribosomal subunit. Contacts protein S5. The interaction surface between S4 and S5 is involved in control of translational fidelity.

In terms of biological role, one of the primary rRNA binding proteins, it binds directly to 16S rRNA where it nucleates assembly of the body of the 30S subunit. With S5 and S12 plays an important role in translational accuracy. This chain is Small ribosomal subunit protein uS4, found in Ralstonia pickettii (strain 12J).